Consider the following 331-residue polypeptide: Mitochondrial glycine transporter (331 aa).

3 Solcar repeats span residues 19 to 103, 132 to 216, and 234 to 318; these read SRTT…LRQG, LSNW…LKRR, and SSSS…LILR. 6 helical membrane passes run 25–50, 78–104, 138–163, 191–214, 238–264, and 293–311; these read FAAG…TRVQ, GTLP…RQGL, LATG…VRYE, GFGA…EQLK, INFV…KTRL, and GLGL…AWTV.

This sequence belongs to the mitochondrial carrier (TC 2.A.29) family. SLC25A38 subfamily.

The protein localises to the mitochondrion inner membrane. It catalyses the reaction glycine(in) = glycine(out). Its function is as follows. Mitochondrial glycine transporter that imports glycine into the mitochondrial matrix. Plays an important role in providing glycine for the first enzymatic step in heme biosynthesis, the condensation of glycine with succinyl-CoA to produce 5-aminolevulinate (ALA) in the mitochondrial matrix. This chain is Mitochondrial glycine transporter, found in Neosartorya fischeri (strain ATCC 1020 / DSM 3700 / CBS 544.65 / FGSC A1164 / JCM 1740 / NRRL 181 / WB 181) (Aspergillus fischerianus).